The chain runs to 1638 residues: Chromatin-remodeling ATPase INO80 (1638 aa).

The disordered stretch occupies residues 41–93; it reads SLRKPLSSDEETDDEHVVKREHDVQDSDDSSTVGVVRMKQSSKRKSRLLASKE. Phosphoserine occurs at positions 47 and 48. Threonine 52 is subject to Phosphothreonine. Basic and acidic residues predominate over residues 55 to 65; sequence EHVVKREHDVQ. Serine 67 and serine 70 each carry phosphoserine. A coiled-coil region spans residues 136-161; the sequence is VQQLLREHVREQRQRKNYYKKAANAQ. Residues 201–259 form a disordered region; it reads RLAEAQAGPKPPKQRRRGRKKRDNMGSPESGEVPPSELGKYTFGDTLPNNEDDDEDGGE. Residues 212–222 are compositionally biased toward basic residues; that stretch reads PKQRRRGRKKR. Serine 227 and serine 230 each carry phosphoserine. The span at 250 to 259 shows a compositional bias: acidic residues; it reads NEDDDEDGGE. Residues 313–438 enclose the DBINO domain; sequence IWQIMSKKES…AHFMSKKLGQ (126 aa). Positions 499–528 are disordered; the sequence is KEKEEEEQAQESVEDIKPEPRPEMKDLPQP. The span at 502 to 511 shows a compositional bias: acidic residues; it reads EEEEQAQESV. The span at 512–526 shows a compositional bias: basic and acidic residues; sequence EDIKPEPRPEMKDLP. In terms of domain architecture, Helicase ATP-binding spans 547-718; that stretch reads ANIYDQGISG…WALLHFIMPT (172 aa). 560-567 serves as a coordination point for ATP; the sequence is DEMGLGKT. Positions 1160-1315 constitute a Helicase C-terminal domain; the sequence is VLDNLLTRLK…GGNFKPDTLK (156 aa). Disordered regions lie at residues 1335–1364 and 1463–1638; these read QEAK…DVNM and FLDD…VGPE. Over residues 1338-1350 the composition is skewed to polar residues; it reads KLQSSSPIPAATQ. Over residues 1473–1495 the composition is skewed to basic residues; the sequence is MRRRHHPRGTRRGRPRGSTRRGG. 2 stretches are compositionally biased toward low complexity: residues 1505–1534 and 1618–1627; these read TPTQ…GTSS and SPATSRAPSP.

This sequence belongs to the SNF2/RAD54 helicase family. As to quaternary structure, component of the chromatin remodeling Ino80 complex.

The protein localises to the nucleus. It catalyses the reaction ATP + H2O = ADP + phosphate + H(+). Its function is as follows. ATPase component of the chromatin remodeling INO80 complex which is involved in transcriptional regulation, DNA replication and DNA repair. Binds DNA. As part of the INO80 complex, remodels chromatin by shifting nucleosomes. This Drosophila melanogaster (Fruit fly) protein is Chromatin-remodeling ATPase INO80.